The sequence spans 331 residues: Biotin synthase (331 aa).

Residues 53-272 enclose the Radical SAM core domain; the sequence is NHVETASLLS…LATARVMMPR (220 aa). Residues Cys-68, Cys-72, and Cys-75 each contribute to the [4Fe-4S] cluster site. [2Fe-2S] cluster contacts are provided by Cys-112, Cys-143, Cys-203, and Arg-276.

It belongs to the radical SAM superfamily. Biotin synthase family. Homodimer. [4Fe-4S] cluster serves as cofactor. It depends on [2Fe-2S] cluster as a cofactor.

It catalyses the reaction (4R,5S)-dethiobiotin + (sulfur carrier)-SH + 2 reduced [2Fe-2S]-[ferredoxin] + 2 S-adenosyl-L-methionine = (sulfur carrier)-H + biotin + 2 5'-deoxyadenosine + 2 L-methionine + 2 oxidized [2Fe-2S]-[ferredoxin]. It participates in cofactor biosynthesis; biotin biosynthesis; biotin from 7,8-diaminononanoate: step 2/2. In terms of biological role, catalyzes the conversion of dethiobiotin (DTB) to biotin by the insertion of a sulfur atom into dethiobiotin via a radical-based mechanism. In Bradyrhizobium diazoefficiens (strain JCM 10833 / BCRC 13528 / IAM 13628 / NBRC 14792 / USDA 110), this protein is Biotin synthase.